The sequence spans 119 residues: Putative nitrilase-like protein YIL165C (119 aa).

In terms of domain architecture, CN hydrolase spans 1–82; it reads MKNIAYEGRL…EGLLTAEINT (82 aa). The active-site Proton acceptor is aspartate 21.

It belongs to the carbon-nitrogen hydrolase superfamily. Nitrilase family.

This chain is Putative nitrilase-like protein YIL165C, found in Saccharomyces cerevisiae (strain ATCC 204508 / S288c) (Baker's yeast).